The sequence spans 174 residues: Transmembrane protein 208 (174 aa).

The next 3 helical transmembrane spans lie at 30–50 (NMAIGCAAPALLLSFLVFEVT), 54–74 (VFMHILSLLILGSSYQFMAFM), and 111–131 (GTLLLALISNYFWLVLLLAPI). The tract at residues 151–174 (AQDDNPQVDEKKQKKMDRRMRRMR) is disordered. Positions 163–174 (QKKMDRRMRRMR) are enriched in basic residues.

It belongs to the TMEM208 family. In terms of assembly, interacts with fz. Expressed in the brain.

Its subcellular location is the endoplasmic reticulum membrane. In terms of biological role, may play an important role during development and helps to maintain proper levels of Fz. In Drosophila melanogaster (Fruit fly), this protein is Transmembrane protein 208.